A 405-amino-acid polypeptide reads, in one-letter code: CRS2-associated factor 1, mitochondrial (405 aa).

Residues 1–20 constitute a mitochondrion transit peptide; the sequence is MFLIRLSRHNPSSFTLLTRR. The segment at 32-75 is disordered; that stretch reads RDLYNFQSPPPLSSSASENPDFNQKNNNKKKPKPQYRPPSSLEG. CRM domains lie at 157 to 255 and 277 to 373; these read ASLT…KRPK and DGLS…KEDD. The segment at 384–405 is disordered; that stretch reads SIDSDVDLSCSRGAQDSPDETT.

As to quaternary structure, part of large ribonucleo-protein complexes that include group IIB introns.

It is found in the mitochondrion. Functionally, may be involved in the splicing of group IIB introns in mitochondria. This is CRS2-associated factor 1, mitochondrial from Arabidopsis thaliana (Mouse-ear cress).